A 156-amino-acid polypeptide reads, in one-letter code: Small ribosomal subunit protein uS7 (156 aa).

It belongs to the universal ribosomal protein uS7 family. In terms of assembly, part of the 30S ribosomal subunit. Contacts proteins S9 and S11.

In terms of biological role, one of the primary rRNA binding proteins, it binds directly to 16S rRNA where it nucleates assembly of the head domain of the 30S subunit. Is located at the subunit interface close to the decoding center, probably blocks exit of the E-site tRNA. This chain is Small ribosomal subunit protein uS7, found in Mycoplasma mobile (strain ATCC 43663 / 163K / NCTC 11711) (Mesomycoplasma mobile).